The chain runs to 111 residues: Cell cycle protein GpsB (111 aa).

The stretch at 38 to 72 forms a coiled coil; that stretch reads IKDYEAFHKEFEQLKQQNARLKRELEEQKLAATQV.

It belongs to the GpsB family. In terms of assembly, forms polymers through the coiled coil domains. Interacts with PBP1, MreC and EzrA.

The protein resides in the cytoplasm. Divisome component that associates with the complex late in its assembly, after the Z-ring is formed, and is dependent on DivIC and PBP2B for its recruitment to the divisome. Together with EzrA, is a key component of the system that regulates PBP1 localization during cell cycle progression. Its main role could be the removal of PBP1 from the cell pole after pole maturation is completed. Also contributes to the recruitment of PBP1 to the division complex. Not essential for septum formation. The sequence is that of Cell cycle protein GpsB from Bacillus cereus (strain ATCC 10987 / NRS 248).